A 249-amino-acid chain; its full sequence is DNA repair protein RecO (249 aa).

It belongs to the RecO family.

In terms of biological role, involved in DNA repair and RecF pathway recombination. The chain is DNA repair protein RecO from Mycoplasma mycoides subsp. mycoides SC (strain CCUG 32753 / NCTC 10114 / PG1).